The chain runs to 73 residues: Acyl carrier protein (73 aa).

The Carrier domain occupies 1–73; sequence MAVFEKVQDI…DLVKYVENNK (73 aa). Position 35 is an O-(pantetheine 4'-phosphoryl)serine (Ser-35).

Belongs to the acyl carrier protein (ACP) family. Post-translationally, 4'-phosphopantetheine is transferred from CoA to a specific serine of apo-ACP by AcpS. This modification is essential for activity because fatty acids are bound in thioester linkage to the sulfhydryl of the prosthetic group.

The protein localises to the cytoplasm. It participates in lipid metabolism; fatty acid biosynthesis. Its function is as follows. Carrier of the growing fatty acid chain in fatty acid biosynthesis. This is Acyl carrier protein from Lactococcus lactis subsp. lactis (strain IL1403) (Streptococcus lactis).